The primary structure comprises 206 residues: Protein GrpE (206 aa).

The span at 1–18 (MNNEDKKLQDEQLQKETV) shows a compositional bias: basic and acidic residues. Residues 1–21 (MNNEDKKLQDEQLQKETVEAA) form a disordered region.

This sequence belongs to the GrpE family. Homodimer.

The protein localises to the cytoplasm. Participates actively in the response to hyperosmotic and heat shock by preventing the aggregation of stress-denatured proteins, in association with DnaK and GrpE. It is the nucleotide exchange factor for DnaK and may function as a thermosensor. Unfolded proteins bind initially to DnaJ; upon interaction with the DnaJ-bound protein, DnaK hydrolyzes its bound ATP, resulting in the formation of a stable complex. GrpE releases ADP from DnaK; ATP binding to DnaK triggers the release of the substrate protein, thus completing the reaction cycle. Several rounds of ATP-dependent interactions between DnaJ, DnaK and GrpE are required for fully efficient folding. This is Protein GrpE from Photobacterium profundum (strain SS9).